Here is a 258-residue protein sequence, read N- to C-terminus: Imidazole glycerol phosphate synthase subunit HisF (258 aa).

Active-site residues include Asp-11 and Asp-130.

The protein belongs to the HisA/HisF family. As to quaternary structure, heterodimer of HisH and HisF.

It localises to the cytoplasm. It catalyses the reaction 5-[(5-phospho-1-deoxy-D-ribulos-1-ylimino)methylamino]-1-(5-phospho-beta-D-ribosyl)imidazole-4-carboxamide + L-glutamine = D-erythro-1-(imidazol-4-yl)glycerol 3-phosphate + 5-amino-1-(5-phospho-beta-D-ribosyl)imidazole-4-carboxamide + L-glutamate + H(+). It functions in the pathway amino-acid biosynthesis; L-histidine biosynthesis; L-histidine from 5-phospho-alpha-D-ribose 1-diphosphate: step 5/9. In terms of biological role, IGPS catalyzes the conversion of PRFAR and glutamine to IGP, AICAR and glutamate. The HisF subunit catalyzes the cyclization activity that produces IGP and AICAR from PRFAR using the ammonia provided by the HisH subunit. In Pectobacterium carotovorum subsp. carotovorum (strain PC1), this protein is Imidazole glycerol phosphate synthase subunit HisF.